Consider the following 295-residue polypeptide: Phosphatidylserine decarboxylase proenzyme (295 aa).

Catalysis depends on charge relay system; for autoendoproteolytic cleavage activity residues Asp101, His158, and Ser262. Catalysis depends on Ser262, which acts as the Schiff-base intermediate with substrate; via pyruvic acid; for decarboxylase activity. Position 262 is a pyruvic acid (Ser); by autocatalysis (Ser262).

It belongs to the phosphatidylserine decarboxylase family. PSD-B subfamily. Prokaryotic type I sub-subfamily. Heterodimer of a large membrane-associated beta subunit and a small pyruvoyl-containing alpha subunit. Requires pyruvate as cofactor. In terms of processing, is synthesized initially as an inactive proenzyme. Formation of the active enzyme involves a self-maturation process in which the active site pyruvoyl group is generated from an internal serine residue via an autocatalytic post-translational modification. Two non-identical subunits are generated from the proenzyme in this reaction, and the pyruvate is formed at the N-terminus of the alpha chain, which is derived from the carboxyl end of the proenzyme. The autoendoproteolytic cleavage occurs by a canonical serine protease mechanism, in which the side chain hydroxyl group of the serine supplies its oxygen atom to form the C-terminus of the beta chain, while the remainder of the serine residue undergoes an oxidative deamination to produce ammonia and the pyruvoyl prosthetic group on the alpha chain. During this reaction, the Ser that is part of the protease active site of the proenzyme becomes the pyruvoyl prosthetic group, which constitutes an essential element of the active site of the mature decarboxylase.

Its subcellular location is the cell membrane. It catalyses the reaction a 1,2-diacyl-sn-glycero-3-phospho-L-serine + H(+) = a 1,2-diacyl-sn-glycero-3-phosphoethanolamine + CO2. It functions in the pathway phospholipid metabolism; phosphatidylethanolamine biosynthesis; phosphatidylethanolamine from CDP-diacylglycerol: step 2/2. In terms of biological role, catalyzes the formation of phosphatidylethanolamine (PtdEtn) from phosphatidylserine (PtdSer). This is Phosphatidylserine decarboxylase proenzyme from Pasteurella multocida (strain Pm70).